The following is a 239-amino-acid chain: Myogenic factor 6 (239 aa).

Positions 28–59 (PGVSPLYEGNDSPLSPGQDPVPSETGCESSGE) are disordered. In terms of domain architecture, bHLH spans 92-143 (DRRKAATLRERRRLKKINEAFDALKKKTVPNPNQRLPKVEILRSAINYIEKL). Over residues 182–196 (CQSWQENPDHSSSQM) the composition is skewed to polar residues. Residues 182–239 (CQSWQENPDHSSSQMAGHREGAVLESSESSSLRRLSSIVDSISTEEPKARCPSQISEK) form a disordered region. Positions 204-223 (VLESSESSSLRRLSSIVDSI) are enriched in low complexity.

Efficient DNA binding requires dimerization with another bHLH protein.

It is found in the nucleus. Involved in muscle differentiation (myogenic factor). Induces fibroblasts to differentiate into myoblasts. Probable sequence specific DNA-binding protein. The chain is Myogenic factor 6 (myf6) from Danio rerio (Zebrafish).